Here is a 195-residue protein sequence, read N- to C-terminus: UPF0215 protein TGAM_0348 (195 aa).

It belongs to the UPF0215 family.

The sequence is that of UPF0215 protein TGAM_0348 from Thermococcus gammatolerans (strain DSM 15229 / JCM 11827 / EJ3).